The sequence spans 148 residues: Cell division protein SepF (148 aa).

Residues 1 to 59 (MNNKFKDFFGFGDNDSYEERDAYEEHYDEQEEMQNSNRPTNSRDSNVVSIKAGQAGSGP) are disordered. A compositionally biased stretch (polar residues) spans 33-48 (MQNSNRPTNSRDSNVV).

This sequence belongs to the SepF family. In terms of assembly, homodimer. Interacts with FtsZ.

The protein resides in the cytoplasm. Cell division protein that is part of the divisome complex and is recruited early to the Z-ring. Probably stimulates Z-ring formation, perhaps through the cross-linking of FtsZ protofilaments. Its function overlaps with FtsA. This Lactobacillus delbrueckii subsp. bulgaricus (strain ATCC BAA-365 / Lb-18) protein is Cell division protein SepF.